Reading from the N-terminus, the 301-residue chain is Transcription elongation factor A protein 1 (301 aa).

Met-1 is modified (N-acetylmethionine). Residues 3–80 enclose the TFIIS N-terminal domain; the sequence is DEVIRIAKKM…KSWKKLLDGP (78 aa). A Glycyl lysine isopeptide (Lys-Gly) (interchain with G-Cter in ubiquitin) cross-link involves residue Lys-55. Residues Ser-57, Ser-81, Ser-97, and Ser-100 each carry the phosphoserine modification. Basic and acidic residues predominate over residues 76-93; the sequence is LLDGPSTDKDSEEKKKDT. A disordered region spans residues 76-139; sequence LLDGPSTDKD…FPRAPSTSDS (64 aa). Positions 140–256 constitute a TFIIS central domain; that stretch reads VRLKCREMLA…EHQMAKTGGT (117 aa). Residues 259-299 form a TFIIS-type zinc finger; that stretch reads DLFTCGKCKKKNCTYTQVQTRSADEPMTTFVVCNECGNRWK. Zn(2+)-binding residues include Cys-263, Cys-266, Cys-291, and Cys-294.

The protein belongs to the TFS-II family. In terms of assembly, interacts with EAF2. Associates with UBR5 and forms a transcription regulatory complex made of CDK9, Pol II, UBR5 and TCEA1/TFIIS. Part of TBP-based Pol II pre-initiation complex (PIC), in which Pol II core assembles with general transcription factors and other specific initiation factors including GTF2E1, GTF2E2, GTF2F1, GTF2F2, TCEA1, ERCC2, ERCC3, GTF2H2, GTF2H3, GTF2H4, GTF2H5, GTF2A1, GTF2A2, GTF2B and TBP; this large multi-subunit PIC complex mediates DNA unwinding and targets Pol II core to the transcription start site where the first phosphodiester bond forms.

It is found in the nucleus. Necessary for efficient RNA polymerase II transcription elongation past template-encoded arresting sites. The arresting sites in DNA have the property of trapping a certain fraction of elongating RNA polymerases that pass through, resulting in locked ternary complexes. Cleavage of the nascent transcript by S-II allows the resumption of elongation from the new 3'-terminus. This is Transcription elongation factor A protein 1 (TCEA1) from Bos taurus (Bovine).